A 465-amino-acid chain; its full sequence is Sensor histidine kinase ZraS (465 aa).

The Cytoplasmic segment spans residues 1 to 14; the sequence is MSFIRLHKDAAAMW. Residues 15–35 traverse the membrane as a helical segment; the sequence is LSRLLPAAIFILVGLFSIMVI. Over 36–203 the chain is Periplasmic; the sequence is RDYGRESAAA…ATQAREWRNT (168 aa). The helical transmembrane segment at 204–224 threads the bilayer; sequence LIVLSALAAVLLATLLAFFWY. Residues 225–465 are Cytoplasmic-facing; it reads QRYQRSHREL…WLPVIARQQD (241 aa). One can recognise a Histidine kinase domain in the interval 253–461; sequence GVAHEIRNPL…VFTIWLPVIA (209 aa). Position 256 is a phosphohistidine; by autocatalysis (His-256).

In terms of processing, autophosphorylated.

It is found in the cell inner membrane. The catalysed reaction is ATP + protein L-histidine = ADP + protein N-phospho-L-histidine.. Its activity is regulated as follows. Activity of the ZraS/ZraR two-component system is repressed by the zinc-bound form of ZraP, which probably interacts with the periplasmic region of ZraS. Its function is as follows. Part of the Zra signaling pathway, an envelope stress response (ESR) system composed of the periplasmic accessory protein ZraP, the histidine kinase ZraS and the transcriptional regulator ZraR. The ZraPSR system contributes to antibiotic resistance and is important for membrane integrity in the presence of membrane-targeting biocides. ZraS is a member of the two-component regulatory system ZraS/ZraR. Functions as a membrane-associated sensor kinase that phosphorylates ZraR in response to high concentrations of Zn(2+) or Pb(2+) in the medium. The polypeptide is Sensor histidine kinase ZraS (zraS) (Salmonella typhi).